The primary structure comprises 493 residues: Serine/threonine-protein kinase 3 (493 aa).

In terms of domain architecture, Protein kinase spans 26-277; that stretch reads FDVLEKLGEG…ATQLLQHPFI (252 aa). ATP is bound by residues 32-40 and lysine 55; that span reads LGEGSYGSV. Aspartate 145 functions as the Proton acceptor in the catalytic mechanism. Threonine 179 carries the post-translational modification Phosphothreonine; by autocatalysis. Residues 286–327 adopt a coiled-coil conformation; that stretch reads LRDLITEAMDIKAKRHEELQRELEEEDENSEEDELDSHTMVK. Disordered regions lie at residues 303 to 336 and 369 to 414; these read ELQRELEEEDENSEEDELDSHTMVKTNSESAGTM and DDEE…NCNQ. Over residues 308-320 the composition is skewed to acidic residues; sequence LEEEDENSEEDEL. Over residues 325-336 the composition is skewed to polar residues; that stretch reads MVKTNSESAGTM. Positions 369 to 378 are enriched in acidic residues; it reads DDEEEEEEED. The segment covering 398–410 has biased composition (basic and acidic residues); that stretch reads YFDKQDSKNKPHD. The SARAH domain maps to 439–486; it reads FDFLKNLSFEELQMRLKALDPMMEREIEDLRQRYNAKRQPILDAMDAK. Residues 444–477 are a coiled coil; the sequence is NLSFEELQMRLKALDPMMEREIEDLRQRYNAKRQ.

The protein belongs to the protein kinase superfamily. STE Ser/Thr protein kinase family. STE20 subfamily. In terms of assembly, homodimer; mediated via the coiled-coil region. Mg(2+) serves as cofactor.

The protein localises to the cytoplasm. It is found in the nucleus. The enzyme catalyses L-seryl-[protein] + ATP = O-phospho-L-seryl-[protein] + ADP + H(+). It carries out the reaction L-threonyl-[protein] + ATP = O-phospho-L-threonyl-[protein] + ADP + H(+). Its activity is regulated as follows. Inhibited by the C-terminal non-catalytic region. Activated by caspase-cleavage. Full activation also requires homodimerization and autophosphorylation of Thr-179. In terms of biological role, stress-activated, pro-apoptotic kinase which, following caspase-cleavage, enters the nucleus and induces chromatin condensation followed by internucleosomal DNA fragmentation. Key component of the Hippo signaling pathway which plays a pivotal role in organ size control and tumor suppression by restricting proliferation and promoting apoptosis. The core of this pathway is composed of a kinase cascade wherein stk3/mst2 and stk4/mst1, in complex with its regulatory protein sav1, phosphorylates and activates lats1/2 in complex with its regulatory protein mob1, which in turn phosphorylates and inactivates yap1 oncoprotein and wwtr1/taz. Phosphorylation of yap1 by lats2 inhibits its translocation into the nucleus to regulate cellular genes important for cell proliferation, cell death, and cell migration. In Xenopus laevis (African clawed frog), this protein is Serine/threonine-protein kinase 3 (stk3).